Consider the following 784-residue polypeptide: Serine/threonine-protein kinase DCLK2 (784 aa).

Residues 1 to 45 form a disordered region; it reads MASTRSIELEHFEERDKRPRPGSRRGAPSSSGGSSSSGPKGNGLI. Over residues 7–19 the composition is skewed to basic and acidic residues; that stretch reads IELEHFEERDKRP. The segment covering 24–39 has biased composition (low complexity); the sequence is RRGAPSSSGGSSSSGP. Threonine 61 carries the post-translational modification Phosphothreonine. Doublecortin domains are found at residues 72 to 158 and 197 to 280; these read KKAR…VDYT and KLVT…AQDD. Composition is skewed to low complexity over residues 300 to 312 and 341 to 364; these read AVKY…PGPS and TPSS…SPGS. The segment at 300-368 is disordered; sequence AVKYSGSKSP…PTSPGSFRGL (69 aa). Serine 379 bears the Phosphoserine mark. The 258-residue stretch at 411–668 folds into the Protein kinase domain; that stretch reads YKIGKVIGDG…AGEILSHPWV (258 aa). Residues 417–425 and lysine 440 contribute to the ATP site; that span reads IGDGNFAVV. Aspartate 532 acts as the Proton acceptor in catalysis. Serine 664 is modified (phosphoserine). Threonine 683 bears the Phosphothreonine mark. The tract at residues 724-784 is disordered; the sequence is CQDSSRPGME…RAGTWRRHRD (61 aa). Residues 741–758 are compositionally biased toward low complexity; it reads SASAEEPPVSAPAAAPAP.

Belongs to the protein kinase superfamily. CAMK Ser/Thr protein kinase family. CaMK subfamily. In terms of assembly, binds to and stabilizes microtubules. Interacts with MAPK8IP1/JIP-1, MAPK8IP2/JIP-2, MAPK9/JNK2, PPP1R9B/NEURABIN-2 and actin. Autophosphorylated.

The protein localises to the cytoplasm. It localises to the cytoskeleton. It carries out the reaction L-seryl-[protein] + ATP = O-phospho-L-seryl-[protein] + ADP + H(+). The enzyme catalyses L-threonyl-[protein] + ATP = O-phospho-L-threonyl-[protein] + ADP + H(+). Functionally, protein kinase with a significantly reduced Ca(2+)/CAM affinity and dependence compared to other members of the CaMK family. May play a role in the down-regulation of CRE-dependent gene activation probably by phosphorylation of the CREB coactivator CRTC2/TORC2 and the resulting retention of TORC2 in the cytoplasm. The chain is Serine/threonine-protein kinase DCLK2 (DCLK2) from Ailuropoda melanoleuca (Giant panda).